Here is a 719-residue protein sequence, read N- to C-terminus: DNA replication licensing factor MCM7 (719 aa).

Ala-2 carries the post-translational modification N-acetylalanine. Glycyl lysine isopeptide (Lys-Gly) (interchain with G-Cter in SUMO2) cross-links involve residues Lys-15 and Lys-28. A Phosphoserine modification is found at Ser-314. One can recognise an MCM domain in the interval 332–538 (FYEKLAASIA…NDLRLAQHIT (207 aa)). Tyr-345 is an ATP binding site. A Phosphoserine modification is found at Ser-365. Residues Gly-384, Ala-386, Lys-387, Ser-388, and Asn-489 each coordinate ATP. The residue at position 500 (Ser-500) is a Phosphoserine. Residues 513-516 (SRFD) carry the Arginine finger motif. An ATP-binding site is contributed by Arg-514. Residues 521 to 564 (IQDRPDRDNDLRLAQHITYVHQHSRQPPAQFEPLDMKLMRRYIA) form an interaction with RAD17 region. Residues 577-719 (LADYITAAYV…NTSRTRITFV (143 aa)) are interaction with ATRIP. Residue Arg-604 coordinates ATP. Residue Ser-678 is modified to Phosphoserine.

It belongs to the MCM family. In terms of assembly, component of the MCM2-7 complex. The complex forms a toroidal hexameric ring with the proposed subunit order MCM2-MCM6-MCM4-MCM7-MCM3-MCM5. Component of the CMG helicase complex, a hexameric ring of related MCM2-7 subunits stabilized by CDC45 and the tetrameric GINS complex. Interacts with the ATR-ATRIP complex and with RAD17. Interacts with TIPIN. Interacts with MCMBP. Interacts with ANKRD17. Component of the replisome complex composed of at least DONSON, MCM2, MCM7, PCNA and TICRR. In terms of processing, O-glycosylated (O-GlcNAcylated), in a cell cycle-dependent manner. Post-translationally, ubiquitinated by ECS(LRR1) E3 ubiquitin-protein ligase complex when forks converge following formation of DNA interstrand cross-links. During mitosis, ubiquitinated by TRAIP when forks converge following formation of DNA interstrand cross-links. Short ubiquitin chains on MCM7 promote recruitment of DNA glycosylase NEIL3. If the interstrand cross-link cannot be cleaved by NEIL3, the ubiquitin chains continue to grow on MCM7, promoting the unloading of the CMG helicase complex by the VCP/p97 ATPase.

The protein localises to the nucleus. Its subcellular location is the chromosome. The enzyme catalyses ATP + H2O = ADP + phosphate + H(+). Functionally, acts as a component of the MCM2-7 complex (MCM complex) which is the replicative helicase essential for 'once per cell cycle' DNA replication initiation and elongation in eukaryotic cells. Core component of CDC45-MCM-GINS (CMG) helicase, the molecular machine that unwinds template DNA during replication, and around which the replisome is built. The active ATPase sites in the MCM2-7 ring are formed through the interaction surfaces of two neighboring subunits such that a critical structure of a conserved arginine finger motif is provided in trans relative to the ATP-binding site of the Walker A box of the adjacent subunit. The six ATPase active sites, however, are likely to contribute differentially to the complex helicase activity. Uncomplexed form does not show ATPase or DNA helicase. Required for S-phase checkpoint activation upon UV-induced damage. This Mus musculus (Mouse) protein is DNA replication licensing factor MCM7 (Mcm7).